A 461-amino-acid chain; its full sequence is GTPase Der (461 aa).

EngA-type G domains are found at residues 9–171 (KTIA…DLNQ) and 200–371 (IQVG…ECFS). GTP contacts are provided by residues 15-22 (GQPNVGKS), 62-66 (DTGGM), 123-126 (NKID), 206-213 (GRVNVGKS), 253-257 (DTAGI), and 317-320 (NKWD). The 85-residue stretch at 372-456 (KRIPTSLLNS…PLILNAKDKK (85 aa)) folds into the KH-like domain.

The protein belongs to the TRAFAC class TrmE-Era-EngA-EngB-Septin-like GTPase superfamily. EngA (Der) GTPase family. As to quaternary structure, associates with the 50S ribosomal subunit.

Its function is as follows. GTPase that plays an essential role in the late steps of ribosome biogenesis. This is GTPase Der from Helicobacter pylori (strain Shi470).